A 338-amino-acid chain; its full sequence is uncharacterized protein (338 aa).

This is an uncharacterized protein from Acidianus filamentous virus 2 (isolate Italy/Pozzuoli) (AFV-2).